A 334-amino-acid polypeptide reads, in one-letter code: Phosphate acyltransferase (334 aa).

Belongs to the PlsX family. In terms of assembly, homodimer. Probably interacts with PlsY.

The protein resides in the cytoplasm. The catalysed reaction is a fatty acyl-[ACP] + phosphate = an acyl phosphate + holo-[ACP]. Its pathway is lipid metabolism; phospholipid metabolism. Its function is as follows. Catalyzes the reversible formation of acyl-phosphate (acyl-PO(4)) from acyl-[acyl-carrier-protein] (acyl-ACP). This enzyme utilizes acyl-ACP as fatty acyl donor, but not acyl-CoA. This Mycoplasma capricolum subsp. capricolum (strain California kid / ATCC 27343 / NCTC 10154) protein is Phosphate acyltransferase.